The following is a 119-amino-acid chain: uncharacterized protein (119 aa).

The disordered stretch occupies residues 55–119; it reads LSTEPPTPPS…SRLPPRSWTN (65 aa). Residues 81–92 show a composition bias toward polar residues; sequence LSYTRCHSTTYT.

This is an uncharacterized protein from Saccharomyces cerevisiae (strain ATCC 204508 / S288c) (Baker's yeast).